The chain runs to 89 residues: N.vectensis toxin 7 (89 aa).

An N-terminal signal peptide occupies residues 1–21 (MASFFKIAVICLVMLVVCSNA). 3 cysteine pairs are disulfide-bonded: C44/C77, C46/C69, and C62/C78.

In terms of tissue distribution, expressed in ectodermal gland cells.

Functionally, probable toxin. In Nematostella vectensis (Starlet sea anemone), this protein is N.vectensis toxin 7.